The following is a 539-amino-acid chain: Chaperonin GroEL 1 (539 aa).

ATP contacts are provided by residues 29 to 32 (TLGP), 86 to 90 (DGTTT), Gly-413, and Asp-493.

The protein belongs to the chaperonin (HSP60) family. As to quaternary structure, forms a cylinder of 14 subunits composed of two heptameric rings stacked back-to-back. Interacts with the co-chaperonin GroES.

The protein resides in the cytoplasm. The catalysed reaction is ATP + H2O + a folded polypeptide = ADP + phosphate + an unfolded polypeptide.. In terms of biological role, together with its co-chaperonin GroES, plays an essential role in assisting protein folding. The GroEL-GroES system forms a nano-cage that allows encapsulation of the non-native substrate proteins and provides a physical environment optimized to promote and accelerate protein folding. This chain is Chaperonin GroEL 1, found in Acidothermus cellulolyticus (strain ATCC 43068 / DSM 8971 / 11B).